The following is a 187-amino-acid chain: Orotate phosphoribosyltransferase (187 aa).

5-phospho-alpha-D-ribose 1-diphosphate-binding positions include R99, K100, K103, H105, and 125–133 (DDVITTGGS). Orotate contacts are provided by T129 and R157.

This sequence belongs to the purine/pyrimidine phosphoribosyltransferase family. PyrE subfamily. As to quaternary structure, homodimer. The cofactor is Mg(2+).

The catalysed reaction is orotidine 5'-phosphate + diphosphate = orotate + 5-phospho-alpha-D-ribose 1-diphosphate. It functions in the pathway pyrimidine metabolism; UMP biosynthesis via de novo pathway; UMP from orotate: step 1/2. Catalyzes the transfer of a ribosyl phosphate group from 5-phosphoribose 1-diphosphate to orotate, leading to the formation of orotidine monophosphate (OMP). The polypeptide is Orotate phosphoribosyltransferase (Leptospira borgpetersenii serovar Hardjo-bovis (strain JB197)).